The chain runs to 1187 residues: Disease resistance protein TAO1 (1187 aa).

The 165-residue stretch at 38–202 folds into the TIR domain; sequence WLHPVFLSFR…KISKDVSDVL (165 aa). The active site involves Glu113. The region spanning 217 to 478 is the NB-ARC domain; sequence EAHTTEITSL…FFRRERIETL (262 aa). 14 LRR repeats span residues 498-522, 611-633, 635-658, 660-679, 680-703, 704-727, 728-750, 752-775, 799-823, 824-849, 870-894, 895-918, 920-942, and 953-974; these read DKSLLSLNLGNIEMHNLLVQLGLDI, SRKLRLLHWERYPLTCLPPKFNP, FLVKINMRDSMLEKLWDGNEPIRN, KWMDLSFCVNLKELPDFSTA, TNLQELRLINCLSLVELPSSIGNA, TNLLELDLIDCSSLVKLPSSIGNL, TNLKKLFLNRCSSLVKLPSSFGN, TSLKELNLSGCSSLLEIPSSIGNI, NTNLKELHLLNCSSLMECPSSMLNL, TRLEDLNLSGCLSLVKLPSIGNVINL, ATNLDTLYLDGCSNLLELPSSIWNI, TNLQSLYLNGCSSLKELPSLVENA, NLQSLSLMKCSSLVELPSSIWRI, and CSSLLELNLVSHPVVPDSLILD.

The catalysed reaction is NAD(+) + H2O = ADP-D-ribose + nicotinamide + H(+). In terms of biological role, TIR-NB-LRR receptor-like protein that contributes to disease resistance induced by the Pseudomonas syringae type III effector AvrB. Acts additively with RPM1 to generate a full disease resistance response to P.syringae expressing this type III effector. The protein is Disease resistance protein TAO1 of Arabidopsis thaliana (Mouse-ear cress).